The sequence spans 614 residues: UvrABC system protein C (614 aa).

One can recognise a GIY-YIG domain in the interval 14 to 91 (TSPGCYIHKD…IKENKPKYNI (78 aa)). The region spanning 196–231 (NKIIDELKGKMAAAAQTMEFERAAEYRDLIQAIGTL) is the UVR domain. Residues 595-614 (LPQVAEERVDYQTEGNHNKP) form a disordered region.

It belongs to the UvrC family. Interacts with UvrB in an incision complex.

The protein localises to the cytoplasm. Its function is as follows. The UvrABC repair system catalyzes the recognition and processing of DNA lesions. UvrC both incises the 5' and 3' sides of the lesion. The N-terminal half is responsible for the 3' incision and the C-terminal half is responsible for the 5' incision. This Streptococcus pneumoniae (strain Taiwan19F-14) protein is UvrABC system protein C.